The primary structure comprises 335 residues: Nucleoid-associated protein CKO_00588 (335 aa).

It belongs to the YejK family.

The protein resides in the cytoplasm. It localises to the nucleoid. The protein is Nucleoid-associated protein CKO_00588 of Citrobacter koseri (strain ATCC BAA-895 / CDC 4225-83 / SGSC4696).